Here is a 469-residue protein sequence, read N- to C-terminus: Peripherin (469 aa).

Composition is skewed to low complexity over residues 1 to 18 (MSHP…SYRR) and 27 to 53 (SPGA…PGSS). Residues 1–60 (MSHPSGLRSSVSSTSYRRTFGPPPSLSPGAFSYSSSSRFSSSRLLGSASPGSSVRLGSFR) are disordered. The segment at 1 to 98 (MSHPSGLRSS…FLATRSNEKQ (98 aa)) is head. At tyrosine 16 the chain carries 3'-nitrotyrosine. Residues serine 27, serine 49, and serine 58 each carry the phosphoserine modification. The IF rod domain occupies 96 to 406 (EKQELQELND…KLLEGEESRI (311 aa)). A coil 1A region spans residues 99–131 (ELQELNDRFANFIEKVRFLEQQNAALRGELNQA). Residues 132 to 142 (RGQEPARADQL) are linker 1. Residues 143–238 (CQQELRELRR…KLHEEELRDL (96 aa)) form a coil 1B region. Positions 239–261 (QLSVESQQVQHVEVEATVKPELT) are linker 2. A coil 2 region spans residues 262-404 (AALRDIRAQY…YRKLLEGEES (143 aa)). Tyrosine 378 bears the 3'-nitrotyrosine mark. The tail stretch occupies residues 405–469 (RISVPVHSFA…SELDKSPQSY (65 aa)). Residues 447 to 469 (GEQVVTESQKEQHSELDKSPQSY) form a disordered region. Tyrosine 469 is subject to Phosphotyrosine.

It belongs to the intermediate filament family. In terms of assembly, forms homodimers (in vitro). Homopolymerizes into a filamentous network (in vitro). Forms heterodimers with NEFL, NEFM or NEFH (in vitro). Interacts with DST (via C-terminus). Interacts with RAB7A; the interaction is direct. Interacts with PRKCE (via phorbol-ester/DAG-type 2 domain). In terms of processing, phosphorylated; phosphorylation increases after nerve injury in regenerating neurons.

The protein resides in the cytoplasm. The protein localises to the cytoskeleton. Its subcellular location is the cell projection. It is found in the axon. It localises to the perikaryon. Its function is as follows. Class-III neuronal intermediate filament protein. May form an independent structural network without the involvement of other neurofilaments or may cooperate with the neuronal intermediate filament proteins NEFL, NEFH, NEFM and INA to form a filamentous network. Assembly of the neuronal intermediate filaments may be regulated by RAB7A. Plays a role in the development of unmyelinated sensory neurons. May be involved in axon elongation and axon regeneration after injury. Inhibits neurite extension in type II spiral ganglion neurons in the cochlea. In Bos taurus (Bovine), this protein is Peripherin (PRPH).